Here is a 103-residue protein sequence, read N- to C-terminus: Large ribosomal subunit protein eL14 (103 aa).

The protein belongs to the eukaryotic ribosomal protein eL14 family.

This chain is Large ribosomal subunit protein eL14, found in Pyrobaculum islandicum (strain DSM 4184 / JCM 9189 / GEO3).